The following is a 428-amino-acid chain: 3-phosphoshikimate 1-carboxyvinyltransferase (428 aa).

3-phosphoshikimate contacts are provided by K21, S22, and R26. K21 lines the phosphoenolpyruvate pocket. Residues G91 and R119 each contribute to the phosphoenolpyruvate site. The 3-phosphoshikimate site is built by S164, Q166, D313, and K340. Q166 is a binding site for phosphoenolpyruvate. The active-site Proton acceptor is D313. Residues R344 and R386 each coordinate phosphoenolpyruvate.

Belongs to the EPSP synthase family. As to quaternary structure, monomer.

It localises to the cytoplasm. The enzyme catalyses 3-phosphoshikimate + phosphoenolpyruvate = 5-O-(1-carboxyvinyl)-3-phosphoshikimate + phosphate. The protein operates within metabolic intermediate biosynthesis; chorismate biosynthesis; chorismate from D-erythrose 4-phosphate and phosphoenolpyruvate: step 6/7. Functionally, catalyzes the transfer of the enolpyruvyl moiety of phosphoenolpyruvate (PEP) to the 5-hydroxyl of shikimate-3-phosphate (S3P) to produce enolpyruvyl shikimate-3-phosphate and inorganic phosphate. The polypeptide is 3-phosphoshikimate 1-carboxyvinyltransferase (Campylobacter jejuni subsp. jejuni serotype O:23/36 (strain 81-176)).